The following is a 303-amino-acid chain: tRNA dimethylallyltransferase (303 aa).

ATP is bound at residue 12-19 (GTTASGKS). Residue 14–19 (TASGKS) participates in substrate binding. The segment at 37–40 (DSRQ) is interaction with substrate tRNA.

It belongs to the IPP transferase family. As to quaternary structure, monomer. It depends on Mg(2+) as a cofactor.

The catalysed reaction is adenosine(37) in tRNA + dimethylallyl diphosphate = N(6)-dimethylallyladenosine(37) in tRNA + diphosphate. Catalyzes the transfer of a dimethylallyl group onto the adenine at position 37 in tRNAs that read codons beginning with uridine, leading to the formation of N6-(dimethylallyl)adenosine (i(6)A). This Synechocystis sp. (strain ATCC 27184 / PCC 6803 / Kazusa) protein is tRNA dimethylallyltransferase.